A 251-amino-acid polypeptide reads, in one-letter code: Cytochrome c oxidase subunit 2 (251 aa).

An N-terminal signal peptide occupies residues 1-15; the sequence is MLTFLSNLNNMIIMN. Residues 16–42 are Mitochondrial intermembrane-facing; that stretch reads DVPTPYGVYFQDSATPNQEGILELHDN. Residues 43 to 64 form a helical membrane-spanning segment; the sequence is IMFYLLVILGLVSWLLFTITRT. At 65–82 the chain is on the mitochondrial matrix side; sequence YSKNPIAYKYIKHGQTIE. Residues 83-107 traverse the membrane as a helical segment; it reads IIWTIFPAVVLLIIAFPSFILLYLC. At 108–251 the chain is on the mitochondrial intermembrane side; the sequence is DEVISPAMTI…PSFLEWLNEQ (144 aa). Cu cation contacts are provided by His-186, Cys-221, Glu-223, Cys-225, His-229, and Met-232. Mg(2+) is bound at residue Glu-223.

The protein belongs to the cytochrome c oxidase subunit 2 family. In terms of assembly, component of the cytochrome c oxidase (complex IV, CIV), a multisubunit enzyme composed of a catalytic core of 3 subunits and several supernumerary subunits. The complex exists as a monomer or a dimer and forms supercomplexes (SCs) in the inner mitochondrial membrane with ubiquinol-cytochrome c oxidoreductase (cytochrome b-c1 complex, complex III, CIII). The cofactor is Cu cation. Post-translationally, the signal sequence of COX2 is processed by IMP1.

The protein localises to the mitochondrion inner membrane. The enzyme catalyses 4 Fe(II)-[cytochrome c] + O2 + 8 H(+)(in) = 4 Fe(III)-[cytochrome c] + 2 H2O + 4 H(+)(out). In terms of biological role, component of the cytochrome c oxidase, the last enzyme in the mitochondrial electron transport chain which drives oxidative phosphorylation. The respiratory chain contains 3 multisubunit complexes succinate dehydrogenase (complex II, CII), ubiquinol-cytochrome c oxidoreductase (cytochrome b-c1 complex, complex III, CIII) and cytochrome c oxidase (complex IV, CIV), that cooperate to transfer electrons derived from NADH and succinate to molecular oxygen, creating an electrochemical gradient over the inner membrane that drives transmembrane transport and the ATP synthase. Cytochrome c oxidase is the component of the respiratory chain that catalyzes the reduction of oxygen to water. Electrons originating from reduced cytochrome c in the intermembrane space (IMS) are transferred via the dinuclear copper A center (CU(A)) of subunit 2 and heme A of subunit 1 to the active site in subunit 1, a binuclear center (BNC) formed by heme A3 and copper B (CU(B)). The BNC reduces molecular oxygen to 2 water molecules using 4 electrons from cytochrome c in the IMS and 4 protons from the mitochondrial matrix. The sequence is that of Cytochrome c oxidase subunit 2 (COX2) from Lachancea kluyveri (strain ATCC 58438 / CBS 3082 / BCRC 21498 / NBRC 1685 / JCM 7257 / NCYC 543 / NRRL Y-12651) (Yeast).